The chain runs to 295 residues: Putative ribose uptake protein RbsU (295 aa).

The next 10 helical transmembrane spans lie at 5–24 (ALLI…TIAS), 34–56 (ILGT…GLAF), 63–80 (FFSI…IITF), 95–114 (TTAF…LGNW), 121–139 (LLGA…MTVW), 154–171 (AVLL…YSAA), 183–205 (FLPQ…TIKG), 220–237 (IFSG…LISA), 244–266 (LATG…IWFL), and 276–293 (TVTI…TITV).

Belongs to the GRP transporter (TC 2.A.7.5) family.

It is found in the cell membrane. Functionally, could be involved in the uptake of ribose. The polypeptide is Putative ribose uptake protein RbsU (rbsU) (Enterococcus faecalis (strain ATCC 700802 / V583)).